We begin with the raw amino-acid sequence, 339 residues long: 5-dehydro-2-deoxygluconokinase (339 aa).

Belongs to the carbohydrate kinase PfkB family.

It carries out the reaction 5-dehydro-2-deoxy-D-gluconate + ATP = 6-phospho-5-dehydro-2-deoxy-D-gluconate + ADP + H(+). The protein operates within polyol metabolism; myo-inositol degradation into acetyl-CoA; acetyl-CoA from myo-inositol: step 5/7. In terms of biological role, catalyzes the phosphorylation of 5-dehydro-2-deoxy-D-gluconate (2-deoxy-5-keto-D-gluconate or DKG) to 6-phospho-5-dehydro-2-deoxy-D-gluconate (DKGP). The polypeptide is 5-dehydro-2-deoxygluconokinase (Clostridium botulinum (strain Eklund 17B / Type B)).